A 229-amino-acid polypeptide reads, in one-letter code: 2-C-methyl-D-erythritol 4-phosphate cytidylyltransferase (229 aa).

This sequence belongs to the IspD/TarI cytidylyltransferase family. IspD subfamily.

It carries out the reaction 2-C-methyl-D-erythritol 4-phosphate + CTP + H(+) = 4-CDP-2-C-methyl-D-erythritol + diphosphate. It participates in isoprenoid biosynthesis; isopentenyl diphosphate biosynthesis via DXP pathway; isopentenyl diphosphate from 1-deoxy-D-xylulose 5-phosphate: step 2/6. Catalyzes the formation of 4-diphosphocytidyl-2-C-methyl-D-erythritol from CTP and 2-C-methyl-D-erythritol 4-phosphate (MEP). This is 2-C-methyl-D-erythritol 4-phosphate cytidylyltransferase from Neisseria meningitidis serogroup A / serotype 4A (strain DSM 15465 / Z2491).